The sequence spans 250 residues: 3-deoxy-manno-octulosonate cytidylyltransferase (250 aa).

It belongs to the KdsB family.

It is found in the cytoplasm. It carries out the reaction 3-deoxy-alpha-D-manno-oct-2-ulosonate + CTP = CMP-3-deoxy-beta-D-manno-octulosonate + diphosphate. The protein operates within nucleotide-sugar biosynthesis; CMP-3-deoxy-D-manno-octulosonate biosynthesis; CMP-3-deoxy-D-manno-octulosonate from 3-deoxy-D-manno-octulosonate and CTP: step 1/1. It participates in bacterial outer membrane biogenesis; lipopolysaccharide biosynthesis. In terms of biological role, activates KDO (a required 8-carbon sugar) for incorporation into bacterial lipopolysaccharide in Gram-negative bacteria. In Pectobacterium atrosepticum (strain SCRI 1043 / ATCC BAA-672) (Erwinia carotovora subsp. atroseptica), this protein is 3-deoxy-manno-octulosonate cytidylyltransferase.